The chain runs to 104 residues: MALTQQKIRIRLQAFDHGLLDQSCSKIVDTANRTNAAAVGPIPLPTRIRRYCVLRSPHVDKDSREHFETRTHRRIIDIYQPSAKTIDALMRLDLPAGVDIEVKL.

Belongs to the universal ribosomal protein uS10 family. In terms of assembly, part of the 30S ribosomal subunit.

Involved in the binding of tRNA to the ribosomes. The protein is Small ribosomal subunit protein uS10 of Gloeobacter violaceus (strain ATCC 29082 / PCC 7421).